The primary structure comprises 428 residues: CinA-like protein (428 aa).

Belongs to the CinA family.

In Chlorobium phaeovibrioides (strain DSM 265 / 1930) (Prosthecochloris vibrioformis (strain DSM 265)), this protein is CinA-like protein.